We begin with the raw amino-acid sequence, 89 residues long: Small ribosomal subunit protein uS15 (89 aa).

This sequence belongs to the universal ribosomal protein uS15 family. As to quaternary structure, part of the 30S ribosomal subunit. Forms a bridge to the 50S subunit in the 70S ribosome, contacting the 23S rRNA.

Functionally, one of the primary rRNA binding proteins, it binds directly to 16S rRNA where it helps nucleate assembly of the platform of the 30S subunit by binding and bridging several RNA helices of the 16S rRNA. In terms of biological role, forms an intersubunit bridge (bridge B4) with the 23S rRNA of the 50S subunit in the ribosome. This chain is Small ribosomal subunit protein uS15, found in Acidithiobacillus ferrooxidans (strain ATCC 23270 / DSM 14882 / CIP 104768 / NCIMB 8455) (Ferrobacillus ferrooxidans (strain ATCC 23270)).